Consider the following 292-residue polypeptide: MAPAVLKTVADVKDWTAGLRREGHRLALVPTMGFLHEGHLSLIREGRRRADVVAVSIFVNPTQFGPKEDLSRYPRDFEGDVAKCISAGAQAIFAPAGPEVMYPQGYQTYVEVTDVSQGLCGARRPGHFRGVATVVTKLLTLFRPEVALFGEKDYQQLQVIRALNQDLHLGADIVGMPTVREPDGLAMSSRNAYLSPEERQRALALSRGLKAAQALLREGTRESEPLVAAVRRELEAAGLREDYVELVDAERLTPLASVAPGQPARLLVAAFSGTTRLIDNMQLGGEENAGRV.

Position 32–39 (32–39 (MGFLHEGH)) interacts with ATP. H39 functions as the Proton donor in the catalytic mechanism. Q63 is a (R)-pantoate binding site. A beta-alanine-binding site is contributed by Q63. 150–153 (GEKD) contributes to the ATP binding site. A (R)-pantoate-binding site is contributed by Q156. Residues V179 and 187–190 (MSSR) each bind ATP.

The protein belongs to the pantothenate synthetase family. As to quaternary structure, homodimer.

It localises to the cytoplasm. It carries out the reaction (R)-pantoate + beta-alanine + ATP = (R)-pantothenate + AMP + diphosphate + H(+). Its pathway is cofactor biosynthesis; (R)-pantothenate biosynthesis; (R)-pantothenate from (R)-pantoate and beta-alanine: step 1/1. Its function is as follows. Catalyzes the condensation of pantoate with beta-alanine in an ATP-dependent reaction via a pantoyl-adenylate intermediate. The chain is Pantothenate synthetase from Myxococcus xanthus (strain DK1622).